Consider the following 281-residue polypeptide: Beta-etherase (281 aa).

Positions 11-87 (DLQLESGCTI…YLDEKYPDRP (77 aa)) constitute a GST N-terminal domain. The segment at 244–281 (GDPEPFVRQTGPAGAGGQALNKGPQTTKMPPRVAEKAD) is disordered.

It belongs to the GST superfamily.

It localises to the cell inner membrane. Its function is as follows. Able to degrade various dimeric lignin compounds. Catalyzes the unique and reductive cleavage of arylglycerol-beta-aryl ether. The chain is Beta-etherase (ligE) from Sphingobium sp. (strain NBRC 103272 / SYK-6).